The chain runs to 505 residues: Annexin A11 (505 aa).

Composition is skewed to pro residues over residues 1-17 and 99-160; these read MSYP…PPAA and PVPP…PVPL. Disordered stretches follow at residues 1–38 and 84–199; these read MSYP…PPIG and PVPP…DAPG. Over residues 161 to 177 the composition is skewed to low complexity; sequence PGQQQPVPSYPGYPGSG. Annexin repeat units lie at residues 200 to 271, 272 to 343, 355 to 427, and 431 to 502; these read FDPL…ALMK, TPVL…SLSQ, SLAQ…AVVK, and NTPA…KICG. N6-acetyllysine is present on residues lysine 248 and lysine 255. An N6-acetyllysine modification is found at lysine 479.

It belongs to the annexin family. As to quaternary structure, interacts with S100A6. Interacts with PDCD6 in a calcium-dependent manner. Interacts with KIF23 during cytokinesis.

The protein localises to the cytoplasm. The protein resides in the melanosome. It localises to the nucleus envelope. It is found in the nucleus. Its subcellular location is the nucleoplasm. The protein localises to the cytoskeleton. The protein resides in the spindle. Binds specifically to calcyclin in a calcium-dependent manner. Required for midbody formation and completion of the terminal phase of cytokinesis. The chain is Annexin A11 (ANXA11) from Homo sapiens (Human).